A 573-amino-acid chain; its full sequence is Urease subunit alpha 2 (573 aa).

The Urease domain maps to 135-573 (GGMDTHVHYI…ISLNQLYFFS (439 aa)). Positions 140, 142, and 223 each coordinate Ni(2+). An N6-carboxylysine modification is found at Lys223. His225 is a substrate binding site. His252 and His278 together coordinate Ni(2+). His326 acts as the Proton donor in catalysis. Asp366 is a binding site for Ni(2+).

It belongs to the metallo-dependent hydrolases superfamily. Urease alpha subunit family. As to quaternary structure, heterotrimer of UreA (gamma), UreB (beta) and UreC (alpha) subunits. Three heterotrimers associate to form the active enzyme. It depends on Ni cation as a cofactor. In terms of processing, carboxylation allows a single lysine to coordinate two nickel ions.

It localises to the cytoplasm. The catalysed reaction is urea + 2 H2O + H(+) = hydrogencarbonate + 2 NH4(+). It functions in the pathway nitrogen metabolism; urea degradation; CO(2) and NH(3) from urea (urease route): step 1/1. This is Urease subunit alpha 2 from Brucella melitensis biotype 1 (strain ATCC 23456 / CCUG 17765 / NCTC 10094 / 16M).